The primary structure comprises 135 residues: Lactoylglutathione lyase (135 aa).

The 125-residue stretch at 2-126 folds into the VOC domain; that stretch reads RLLHTMLRVG…DGYKIELIEE (125 aa). His5 provides a ligand contact to Ni(2+). Residue Arg9 coordinates substrate. A Ni(2+)-binding site is contributed by Glu56. 2 residues coordinate substrate: Asn60 and His74. Ni(2+)-binding residues include His74 and Glu122. Glu122 acts as the Proton donor/acceptor in catalysis.

It belongs to the glyoxalase I family. Homodimer. The cofactor is Ni(2+).

It carries out the reaction (R)-S-lactoylglutathione = methylglyoxal + glutathione. Its pathway is secondary metabolite metabolism; methylglyoxal degradation; (R)-lactate from methylglyoxal: step 1/2. Functionally, catalyzes the conversion of hemimercaptal, formed from methylglyoxal and glutathione, to S-lactoylglutathione. This is Lactoylglutathione lyase (gloA) from Escherichia coli O157:H7.